We begin with the raw amino-acid sequence, 234 residues long: Riboflavin kinase (234 aa).

Residues 1–98 (MAESTTAVGH…QEIFGDNSSV (98 aa)) are H-T-H motif-like. The riboflavin kinase stretch occupies residues 99–234 (VELTGTVTSG…RITVQLKPKE (136 aa)). 108 to 113 (GMGEGR) contributes to the CDP binding site. Residues Thr-137 and Asn-139 each coordinate Mg(2+). Residues Thr-199 and Glu-207 each coordinate FMN. 212-215 (ERLR) lines the CDP pocket.

The protein belongs to the archaeal riboflavin kinase family. It depends on Mg(2+) as a cofactor.

The catalysed reaction is riboflavin + CTP = CDP + FMN + H(+). Its pathway is cofactor biosynthesis; FMN biosynthesis; FMN from riboflavin (CTP route): step 1/1. Catalyzes the CTP-dependent phosphorylation of riboflavin (vitamin B2) to form flavin mononucleotide (FMN). The sequence is that of Riboflavin kinase (ribK) from Haloquadratum walsbyi (strain DSM 16790 / HBSQ001).